Consider the following 463-residue polypeptide: Glycine--tRNA ligase (463 aa).

Substrate contacts are provided by Arg98 and Glu174. ATP is bound by residues 206–208 (RNE), 216–221 (FRTREF), 290–291 (EL), and 334–337 (GADR). Residue 221-225 (FEQME) coordinates substrate. 330-334 (EPSLG) is a binding site for substrate.

The protein belongs to the class-II aminoacyl-tRNA synthetase family. In terms of assembly, homodimer.

The protein resides in the cytoplasm. It carries out the reaction tRNA(Gly) + glycine + ATP = glycyl-tRNA(Gly) + AMP + diphosphate. Its function is as follows. Catalyzes the attachment of glycine to tRNA(Gly). This Staphylococcus saprophyticus subsp. saprophyticus (strain ATCC 15305 / DSM 20229 / NCIMB 8711 / NCTC 7292 / S-41) protein is Glycine--tRNA ligase.